We begin with the raw amino-acid sequence, 490 residues long: uncharacterized protein (490 aa).

Over residues 370-385 (FSMKRPSSSSSSLSGS) the composition is skewed to low complexity. The segment at 370-406 (FSMKRPSSSSSSLSGSWHGDTENSVKQSLASPSEASL) is disordered. Polar residues predominate over residues 391–406 (ENSVKQSLASPSEASL).

It is found in the cytoplasm. The protein localises to the nucleus. This is an uncharacterized protein from Schizosaccharomyces pombe (strain 972 / ATCC 24843) (Fission yeast).